Here is a 179-residue protein sequence, read N- to C-terminus: Ribosome maturation factor RimM (179 aa).

One can recognise a PRC barrel domain in the interval 101 to 179 (EGEVYVHDLC…VELMHRWILE (79 aa)).

It belongs to the RimM family. Binds ribosomal protein uS19.

Its subcellular location is the cytoplasm. In terms of biological role, an accessory protein needed during the final step in the assembly of 30S ribosomal subunit, possibly for assembly of the head region. Essential for efficient processing of 16S rRNA. May be needed both before and after RbfA during the maturation of 16S rRNA. It has affinity for free ribosomal 30S subunits but not for 70S ribosomes. This chain is Ribosome maturation factor RimM, found in Treponema denticola (strain ATCC 35405 / DSM 14222 / CIP 103919 / JCM 8153 / KCTC 15104).